We begin with the raw amino-acid sequence, 295 residues long: Sulfotransferase 1A1 (295 aa).

3'-phosphoadenylyl sulfate is bound at residue 48–53 (KSGTTW). 106–108 (KTH) lines the substrate pocket. His108 functions as the Proton acceptor in the catalytic mechanism. 3'-phosphoadenylyl sulfate contacts are provided by residues Arg130, Ser138, Tyr193, 227–232 (TSFKEM), and 255–259 (FMRKG). Ser138 carries the post-translational modification Phosphoserine.

Belongs to the sulfotransferase 1 family. As to quaternary structure, homodimer. In terms of tissue distribution, liver, lung, adrenal, brain, platelets and skin.

It is found in the cytoplasm. The catalysed reaction is a phenol + 3'-phosphoadenylyl sulfate = an aryl sulfate + adenosine 3',5'-bisphosphate + H(+). It catalyses the reaction 17beta-estradiol + 3'-phosphoadenylyl sulfate = 17beta-estradiol 3-sulfate + adenosine 3',5'-bisphosphate + H(+). The enzyme catalyses 4-ethylphenol + 3'-phosphoadenylyl sulfate = 4-ethylphenyl sulfate + adenosine 3',5'-bisphosphate + H(+). It carries out the reaction 4-nitrophenol + 3'-phosphoadenylyl sulfate = 4-nitrophenyl sulfate + adenosine 3',5'-bisphosphate. The catalysed reaction is dopamine + 3'-phosphoadenylyl sulfate = dopamine 3-O-sulfate + adenosine 3',5'-bisphosphate + H(+). It catalyses the reaction dopamine + 3'-phosphoadenylyl sulfate = dopamine 4-O-sulfate + adenosine 3',5'-bisphosphate + H(+). The enzyme catalyses 3,3',5-triiodo-L-thyronine + 3'-phosphoadenylyl sulfate = 3,3',5-triiodo-L-thyronine sulfate + adenosine 3',5'-bisphosphate + H(+). It carries out the reaction 3,3',5'-triiodo-L-thyronine + 3'-phosphoadenylyl sulfate = 3,3',5'-triiodo-L-thyronine sulfate + adenosine 3',5'-bisphosphate + H(+). The catalysed reaction is 3,3'-diiodo-L-thyronine + 3'-phosphoadenylyl sulfate = 3,3'-diiodo-L-thyronine sulfate + adenosine 3',5'-bisphosphate + H(+). It catalyses the reaction L-thyroxine + 3'-phosphoadenylyl sulfate = L-thyroxine sulfate + adenosine 3',5'-bisphosphate + H(+). Its function is as follows. Sulfotransferase that utilizes 3'-phospho-5'-adenylyl sulfate (PAPS) as sulfonate donor to catalyze the sulfate conjugation of a wide variety of acceptor molecules bearing a hydroxyl or an amine group. Sulfonation increases the water solubility of most compounds, and therefore their renal excretion, but it can also result in bioactivation to form active metabolites. Displays broad substrate specificity for small phenolic compounds. Plays an important role in the sulfonation of endogenous molecules such as steroid hormones. Mediates the sulfate conjugation of a variety of xenobiotics, including the drugs acetaminophen and minoxidil. Mediates also the metabolic activation of carcinogenic N-hydroxyarylamines leading to highly reactive intermediates capable of forming DNA adducts, potentially resulting in mutagenesis. May play a role in gut microbiota-host metabolic interaction. O-sulfonates 4-ethylphenol (4-EP), a dietary tyrosine-derived metabolite produced by gut bacteria. The product 4-EPS crosses the blood-brain barrier and may negatively regulate oligodendrocyte maturation and myelination, affecting the functional connectivity of different brain regions associated with the limbic system. Catalyzes the sulfate conjugation of dopamine. Catalyzes the sulfation of T4 (L-thyroxine/3,5,3',5'-tetraiodothyronine), T3 (3,5,3'-triiodothyronine), rT3 (3,3',5'-triiodothyronine) and 3,3'-T2 (3,3'-diiodothyronine), with a substrate preference of 3,3'-T2 &gt; rT3 &gt; T3 &gt; T4. The polypeptide is Sulfotransferase 1A1 (SULT1A1) (Homo sapiens (Human)).